The sequence spans 372 residues: Neutral protease 2 homolog MGYG_06241 (372 aa).

A signal peptide spans 1-19 (MQFFTAIAAISALVAPALA). The propeptide occupies 20–188 (LPTQELPQAP…THFAGTLNRR (169 aa)). 2 cysteine pairs are disulfide-bonded: Cys195/Cys264 and Cys271/Cys289. Zn(2+) is bound at residue His313. Glu314 is a catalytic residue. 2 residues coordinate Zn(2+): His317 and Asp328.

It belongs to the peptidase M35 family. Zn(2+) serves as cofactor.

Its subcellular location is the secreted. The catalysed reaction is Preferential cleavage of bonds with hydrophobic residues in P1'. Also 3-Asn-|-Gln-4 and 8-Gly-|-Ser-9 bonds in insulin B chain.. Secreted metalloproteinase that allows assimilation of proteinaceous substrates. Shows high activities on basic nuclear substrates such as histone and protamine. May be involved in virulence. This chain is Neutral protease 2 homolog MGYG_06241, found in Arthroderma gypseum (strain ATCC MYA-4604 / CBS 118893) (Microsporum gypseum).